Consider the following 417-residue polypeptide: GTP-binding protein YPT11 (417 aa).

A disordered region spans residues 1-34 (MSQRKRYSLNVVTSPSIPSPTPSAPIRTNESNWE). Residues 97–104 (GDANVGKT), 228–232 (DTAGQ), and 292–295 (NKID) each bind GTP. 2 S-geranylgeranyl cysteine lipidation sites follow: Cys415 and Cys416.

The protein belongs to the small GTPase superfamily. Rab family. As to quaternary structure, interacts with MYO2 (via C-terminal tail domain). Interacts with YIF1, YIP3, YIP4 and YIP5.

The protein localises to the endoplasmic reticulum membrane. Its subcellular location is the bud tip. It localises to the bud neck. In terms of biological role, involved in the positive control of both endoplasmic reticulum (ER) and mitochondrion inheritance during cell divison. Required for the MYO2-dependent retention of newly inherited mitochondria at the bud tip in developing daughter cells. In Saccharomyces cerevisiae (strain YJM789) (Baker's yeast), this protein is GTP-binding protein YPT11 (YPT11).